The following is a 172-amino-acid chain: Adenine phosphoribosyltransferase (172 aa).

This sequence belongs to the purine/pyrimidine phosphoribosyltransferase family. As to quaternary structure, homodimer.

It localises to the cytoplasm. It carries out the reaction AMP + diphosphate = 5-phospho-alpha-D-ribose 1-diphosphate + adenine. It participates in purine metabolism; AMP biosynthesis via salvage pathway; AMP from adenine: step 1/1. Catalyzes a salvage reaction resulting in the formation of AMP, that is energically less costly than de novo synthesis. This Streptococcus uberis (strain ATCC BAA-854 / 0140J) protein is Adenine phosphoribosyltransferase.